Here is a 20-residue protein sequence, read N- to C-terminus: Superoxide dismutase [Fe] (20 aa).

It belongs to the iron/manganese superoxide dismutase family. Homodimer. Requires Fe cation as cofactor.

It is found in the periplasm. The enzyme catalyses 2 superoxide + 2 H(+) = H2O2 + O2. Destroys superoxide anion radicals which are normally produced within the cells and which are toxic to biological systems. This is Superoxide dismutase [Fe] (sodB) from Photobacterium damsela subsp. piscicida (Pasteurella piscicida).